A 738-amino-acid polypeptide reads, in one-letter code: Melanotransferrin (738 aa).

An N-terminal signal peptide occupies residues 1-19; that stretch reads MRGPSGALWLLLALRTVLG. An antigenic epitope region spans residues 20–30; it reads GMEVRWCATSD. Transferrin-like domains lie at 23–357 and 366–706; these read VRWC…GLLC and LRWC…GMSS. 2 disulfides stabilise this stretch: C26–C63 and C36–C54. N-linked (GlcNAc...) asparagine glycosylation occurs at N38. 2 residues coordinate Fe(3+): D78 and Y107. Cystine bridges form between C130/C216, C172/C189, C186/C199, and C257/C271. Position 132 (T132) interacts with hydrogencarbonate. N135 carries N-linked (GlcNAc...) asparagine glycosylation. Hydrogencarbonate contacts are provided by R136, V138, and G139. Y210 lines the Fe(3+) pocket. Fe(3+) contacts are provided by H279, S421, and Y451. A Phosphoserine; by FAM20C modification is found at S462. N-linked (GlcNAc...) asparagine glycosylation is present at N515. Fe(3+) is bound by residues Y556 and H625. C709 carries GPI-anchor amidated cysteine lipidation. A propeptide spans 710 to 738 (removed in mature form); that stretch reads SGAAAPAPGAPLLPLLLPALAARLLPPAL.

This sequence belongs to the transferrin family. Found predominantly in human melanomas and in certain fetal tissues; also found in liver, epithelium, umbilical chord, placenta and sweat gland ducts.

Its subcellular location is the cell membrane. Its function is as follows. Involved in iron cellular uptake. Seems to be internalized and then recycled back to the cell membrane. Binds a single atom of iron per subunit. Could also bind zinc. This chain is Melanotransferrin, found in Homo sapiens (Human).